The primary structure comprises 304 residues: Protoheme IX farnesyltransferase (304 aa).

The next 9 helical transmembrane spans lie at 32 to 52, 54 to 74, 104 to 124, 126 to 146, 154 to 174, 180 to 200, 226 to 246, 247 to 267, and 284 to 304; these read VVAL…PGSV, LQPL…AAAF, ALTF…TLVN, LTAW…TAYL, IVVG…SVTG, ALLL…ALAI, CILL…LVGM, CGPV…YKAW, and FSIY…YLWV.

This sequence belongs to the UbiA prenyltransferase family. Protoheme IX farnesyltransferase subfamily.

The protein resides in the cell inner membrane. It catalyses the reaction heme b + (2E,6E)-farnesyl diphosphate + H2O = Fe(II)-heme o + diphosphate. It participates in porphyrin-containing compound metabolism; heme O biosynthesis; heme O from protoheme: step 1/1. Functionally, converts heme B (protoheme IX) to heme O by substitution of the vinyl group on carbon 2 of heme B porphyrin ring with a hydroxyethyl farnesyl side group. The polypeptide is Protoheme IX farnesyltransferase (Shewanella sediminis (strain HAW-EB3)).